Here is a 402-residue protein sequence, read N- to C-terminus: Nicotinate phosphoribosyltransferase (402 aa).

A Phosphohistidine; by autocatalysis modification is found at H224.

This sequence belongs to the NAPRTase family. Transiently phosphorylated on a His residue during the reaction cycle. Phosphorylation strongly increases the affinity for substrates and increases the rate of nicotinate D-ribonucleotide production. Dephosphorylation regenerates the low-affinity form of the enzyme, leading to product release.

The catalysed reaction is nicotinate + 5-phospho-alpha-D-ribose 1-diphosphate + ATP + H2O = nicotinate beta-D-ribonucleotide + ADP + phosphate + diphosphate. Its pathway is cofactor biosynthesis; NAD(+) biosynthesis; nicotinate D-ribonucleotide from nicotinate: step 1/1. In terms of biological role, catalyzes the synthesis of beta-nicotinate D-ribonucleotide from nicotinate and 5-phospho-D-ribose 1-phosphate at the expense of ATP. This chain is Nicotinate phosphoribosyltransferase, found in Neisseria gonorrhoeae (strain ATCC 700825 / FA 1090).